The primary structure comprises 86 residues: UPF0297 protein SH1302 (86 aa).

Belongs to the UPF0297 family.

The chain is UPF0297 protein SH1302 from Staphylococcus haemolyticus (strain JCSC1435).